A 159-amino-acid polypeptide reads, in one-letter code: Small ribosomal subunit protein uS7 (159 aa).

This sequence belongs to the universal ribosomal protein uS7 family. Part of the 30S ribosomal subunit. Contacts proteins S9 and S11.

Functionally, one of the primary rRNA binding proteins, it binds directly to 16S rRNA where it nucleates assembly of the head domain of the 30S subunit. Is located at the subunit interface close to the decoding center, probably blocks exit of the E-site tRNA. This chain is Small ribosomal subunit protein uS7, found in Rickettsia felis (strain ATCC VR-1525 / URRWXCal2) (Rickettsia azadi).